The following is a 957-amino-acid chain: Glycine dehydrogenase (decarboxylating) (957 aa).

Lys-708 is modified (N6-(pyridoxal phosphate)lysine).

Belongs to the GcvP family. As to quaternary structure, the glycine cleavage system is composed of four proteins: P, T, L and H. The cofactor is pyridoxal 5'-phosphate.

The catalysed reaction is N(6)-[(R)-lipoyl]-L-lysyl-[glycine-cleavage complex H protein] + glycine + H(+) = N(6)-[(R)-S(8)-aminomethyldihydrolipoyl]-L-lysyl-[glycine-cleavage complex H protein] + CO2. The glycine cleavage system catalyzes the degradation of glycine. The P protein binds the alpha-amino group of glycine through its pyridoxal phosphate cofactor; CO(2) is released and the remaining methylamine moiety is then transferred to the lipoamide cofactor of the H protein. The sequence is that of Glycine dehydrogenase (decarboxylating) from Klebsiella pneumoniae (strain 342).